A 286-amino-acid polypeptide reads, in one-letter code: DNA-directed RNA polymerase subunit Rpo3 (286 aa).

It belongs to the archaeal Rpo3/eukaryotic RPB3 RNA polymerase subunit family. In terms of assembly, part of the RNA polymerase complex.

It is found in the cytoplasm. The enzyme catalyses RNA(n) + a ribonucleoside 5'-triphosphate = RNA(n+1) + diphosphate. DNA-dependent RNA polymerase (RNAP) catalyzes the transcription of DNA into RNA using the four ribonucleoside triphosphates as substrates. The polypeptide is DNA-directed RNA polymerase subunit Rpo3 (Aeropyrum pernix (strain ATCC 700893 / DSM 11879 / JCM 9820 / NBRC 100138 / K1)).